The sequence spans 401 residues: Alpha-(1,4)-fucosyltransferase (401 aa).

The Cytoplasmic segment spans residues 1–4 (MPMR). Residues 5 to 27 (YLNAMAALLMMFFTLLILSFTGI) traverse the membrane as a helical; Signal-anchor for type II membrane protein segment. Residues 28 to 401 (LEFPSASTSM…SRRGGKNAGV (374 aa)) are Lumenal-facing. Asn-85 carries N-linked (GlcNAc...) asparagine glycosylation.

Belongs to the glycosyltransferase 10 family. In terms of tissue distribution, present in root, stem, flower buds and green siliques.

The protein localises to the golgi apparatus. The protein resides in the golgi stack membrane. Its pathway is protein modification; protein glycosylation. Its function is as follows. May be involved in cell wall synthesis. Catalyzes alpha-1,4 glycosidic linkages and generates Lewis-a epitopes. In Arabidopsis thaliana (Mouse-ear cress), this protein is Alpha-(1,4)-fucosyltransferase (FUT13).